The sequence spans 927 residues: Probable RNA-dependent RNA polymerase 4 (927 aa).

The segment at 98-135 is disordered; that stretch reads GESPVQFPRTPGKKSCRASQAEVSLDREDPSPKFLRGD. The segment covering 121 to 135 has biased composition (basic and acidic residues); sequence SLDREDPSPKFLRGD.

This sequence belongs to the RdRP family.

The enzyme catalyses RNA(n) + a ribonucleoside 5'-triphosphate = RNA(n+1) + diphosphate. Its function is as follows. Probably involved in the RNA silencing pathway and required for the generation of small interfering RNAs (siRNAs). The chain is Probable RNA-dependent RNA polymerase 4 (RDR4) from Arabidopsis thaliana (Mouse-ear cress).